The primary structure comprises 333 residues: 4-hydroxy-3-methylbut-2-enyl diphosphate reductase (333 aa).

Cys-20 is a binding site for [4Fe-4S] cluster. Positions 49 and 82 each coordinate (2E)-4-hydroxy-3-methylbut-2-enyl diphosphate. 2 residues coordinate dimethylallyl diphosphate: His-49 and His-82. Isopentenyl diphosphate-binding residues include His-49 and His-82. Cys-104 contacts [4Fe-4S] cluster. (2E)-4-hydroxy-3-methylbut-2-enyl diphosphate is bound at residue His-132. His-132 serves as a coordination point for dimethylallyl diphosphate. His-132 provides a ligand contact to isopentenyl diphosphate. Glu-134 (proton donor) is an active-site residue. (2E)-4-hydroxy-3-methylbut-2-enyl diphosphate is bound at residue Thr-172. Position 202 (Cys-202) interacts with [4Fe-4S] cluster. (2E)-4-hydroxy-3-methylbut-2-enyl diphosphate contacts are provided by Ser-230, Ser-231, Asn-232, and Ser-274. Residues Ser-230, Ser-231, Asn-232, and Ser-274 each coordinate dimethylallyl diphosphate. Residues Ser-230, Ser-231, Asn-232, and Ser-274 each coordinate isopentenyl diphosphate.

This sequence belongs to the IspH family. [4Fe-4S] cluster is required as a cofactor.

It catalyses the reaction isopentenyl diphosphate + 2 oxidized [2Fe-2S]-[ferredoxin] + H2O = (2E)-4-hydroxy-3-methylbut-2-enyl diphosphate + 2 reduced [2Fe-2S]-[ferredoxin] + 2 H(+). It carries out the reaction dimethylallyl diphosphate + 2 oxidized [2Fe-2S]-[ferredoxin] + H2O = (2E)-4-hydroxy-3-methylbut-2-enyl diphosphate + 2 reduced [2Fe-2S]-[ferredoxin] + 2 H(+). Its pathway is isoprenoid biosynthesis; dimethylallyl diphosphate biosynthesis; dimethylallyl diphosphate from (2E)-4-hydroxy-3-methylbutenyl diphosphate: step 1/1. The protein operates within isoprenoid biosynthesis; isopentenyl diphosphate biosynthesis via DXP pathway; isopentenyl diphosphate from 1-deoxy-D-xylulose 5-phosphate: step 6/6. Catalyzes the conversion of 1-hydroxy-2-methyl-2-(E)-butenyl 4-diphosphate (HMBPP) into a mixture of isopentenyl diphosphate (IPP) and dimethylallyl diphosphate (DMAPP). Acts in the terminal step of the DOXP/MEP pathway for isoprenoid precursor biosynthesis. The sequence is that of 4-hydroxy-3-methylbut-2-enyl diphosphate reductase from Polaromonas sp. (strain JS666 / ATCC BAA-500).